A 77-amino-acid chain; its full sequence is U8-hexatoxin-Mg1a (77 aa).

Positions Met1 to Ala22 are cleaved as a signal peptide. A propeptide spanning residues Tyr23 to Arg43 is cleaved from the precursor. 3 cysteine pairs are disulfide-bonded: Cys46/Cys60, Cys53/Cys65, and Cys59/Cys76.

As to expression, expressed by the venom gland.

Its subcellular location is the secreted. In terms of biological role, intrathorax injection into crickets causes paralysis prolonged for more than 60 minutes, followed by recovery. The protein is U8-hexatoxin-Mg1a of Macrothele gigas (Japanese funnel web spider).